Consider the following 144-residue polypeptide: Protein cornichon homolog 1 (144 aa).

The Cytoplasmic portion of the chain corresponds to 1–10 (MAFTFAAFCY). Residues 11-31 (MLALLLTATLIFFAIWHIIAF) traverse the membrane as a helical segment. At 32–56 (DELKTDYKNPIDQCNTLNPLVLPEY) the chain is on the lumenal side. Residues 57-77 (LIHAFFCVMFLCAAEWLTLGL) form a helical membrane-spanning segment. Residues 78–122 (NMPLLAYHIWRYMSRPVMSGPGLYDPTTIMNADILAYCQKEGWCK) are Cytoplasmic-facing. The helical transmembrane segment at 123 to 143 (LAFYLLAFFYYLYGMIYVLVS) threads the bilayer. S144 is a topological domain (lumenal).

The protein belongs to the cornichon family. In terms of assembly, interacts with AREG immature precursor and with immature TGFA, i.e. with a prosegment and lacking full N-glycosylation, but not with the fully N-glycosylated form. In the Golgi apparatus, may form a complex with GORASP55 and transmembrane TGFA.

It localises to the endoplasmic reticulum membrane. It is found in the golgi apparatus membrane. Functionally, involved in the selective transport and maturation of TGF-alpha family proteins. This chain is Protein cornichon homolog 1 (CNIH1), found in Pongo abelii (Sumatran orangutan).